We begin with the raw amino-acid sequence, 175 residues long: Zinc finger protein ZAT18 (175 aa).

C2H2-type zinc fingers lie at residues 49–71 (FECKTCNRKFDSFQALGGHRASH) and 93–115 (HKCTICDQMFGTGQALGGHMRKH). The Nuclear localization signal motif lies at 71-78 (HKKPKLIV). Positions 146 to 152 (LDLNLTP) match the EAR-like (transcriptional repression) motif.

As to expression, mostly expressed in stems, siliques and leaves, and, to a lower extent, in cotyledons, hypocotyls and roots.

It localises to the nucleus. Transcription factor involved in stress responses. Positive regulator of the jasmonic acid (JA)- mediated signaling pathway. Triggers the up-regulation of LOX3, VSP2, PAL1 and PAL2 in a JA-dependent manner. Promotes drought and osmotic stress tolerance by preventing reactive oxygen species (ROS) production (e.g. H(2)O(2)). The chain is Zinc finger protein ZAT18 from Arabidopsis thaliana (Mouse-ear cress).